We begin with the raw amino-acid sequence, 304 residues long: Ring-infected erythrocyte surface antigen (304 aa).

2 N-linked (GlcNAc...) asparagine glycosylation sites follow: Asn18 and Asn22. The span at 142–159 (EHDAEENVEHDAEENVEH) shows a compositional bias: basic and acidic residues. The tract at residues 142 to 304 (EHDAEENVEH…EENVEEHNGI (163 aa)) is disordered. Residues 160–298 (DAEENAEENV…NVEEYDEENV (139 aa)) are compositionally biased toward acidic residues.

The protein resides in the cell membrane. Functionally, may disrupt the normal intermolecular interactions of the cytoplasmic domain of band 3 and thereby facilitate the invagination of the red cell membrane which is necessary for the formation of the parasitophorous vacuole. The sequence is that of Ring-infected erythrocyte surface antigen (RESA) from Plasmodium falciparum (isolate Palo Alto / Uganda).